The sequence spans 195 residues: Orotate phosphoribosyltransferase (195 aa).

Residues Arg87, Lys91, and Asp112–Ser120 contribute to the 5-phospho-alpha-D-ribose 1-diphosphate site. Positions 116 and 144 each coordinate orotate.

This sequence belongs to the purine/pyrimidine phosphoribosyltransferase family. PyrE subfamily. As to quaternary structure, homodimer. The cofactor is Mg(2+).

It catalyses the reaction orotidine 5'-phosphate + diphosphate = orotate + 5-phospho-alpha-D-ribose 1-diphosphate. It participates in pyrimidine metabolism; UMP biosynthesis via de novo pathway; UMP from orotate: step 1/2. In terms of biological role, catalyzes the transfer of a ribosyl phosphate group from 5-phosphoribose 1-diphosphate to orotate, leading to the formation of orotidine monophosphate (OMP). This is Orotate phosphoribosyltransferase from Sulfurisphaera tokodaii (strain DSM 16993 / JCM 10545 / NBRC 100140 / 7) (Sulfolobus tokodaii).